Consider the following 455-residue polypeptide: Protein king tubby (455 aa).

The segment at R35 to S92 is disordered. The segment covering L67–S92 has biased composition (low complexity). S144 is modified (phosphoserine).

The protein belongs to the TUB family.

Its subcellular location is the cytoplasm. The protein localises to the nucleus. It localises to the cell projection. The protein resides in the cilium membrane. It is found in the rhabdomere. The sequence is that of Protein king tubby from Drosophila virilis (Fruit fly).